Here is a 408-residue protein sequence, read N- to C-terminus: Argininosuccinate synthase (408 aa).

ATP-binding positions include 11 to 19 (AYSGGLDTS) and A38. L-citrulline-binding residues include Y91 and S96. Position 121 (G121) interacts with ATP. The L-aspartate site is built by T123, N127, and D128. N127 is an L-citrulline binding site. Residues R131, S182, S191, E267, and Y279 each coordinate L-citrulline.

The protein belongs to the argininosuccinate synthase family. Type 1 subfamily. In terms of assembly, homotetramer.

The protein localises to the cytoplasm. The catalysed reaction is L-citrulline + L-aspartate + ATP = 2-(N(omega)-L-arginino)succinate + AMP + diphosphate + H(+). Its pathway is amino-acid biosynthesis; L-arginine biosynthesis; L-arginine from L-ornithine and carbamoyl phosphate: step 2/3. This is Argininosuccinate synthase from Zymomonas mobilis subsp. mobilis (strain ATCC 31821 / ZM4 / CP4).